Reading from the N-terminus, the 58-residue chain is Histatherin (58 aa).

An N-terminal signal peptide occupies residues 1–19 (MKIFIFIFIMALILAMIRA).

The protein belongs to the histatin/statherin family. As to expression, expressed in mammary glands.

It is found in the secreted. The chain is Histatherin from Bos taurus (Bovine).